A 163-amino-acid polypeptide reads, in one-letter code: Augmin complex subunit wac (163 aa).

Positions 86 to 115 (ELQRILSSIEEATRDVVMLERFNAAAEERL) form a coiled coil.

Component of the augmin complex composed of dgt2, dgt3, dgt4, dgt5, dgt6, msd1, msd5 and wac. The complex interacts directly or indirectly with microtubules and is required for centrosome-independent generation of spindle microtubules. wac interacts directly (via coiled coil) with dgt2. In terms of tissue distribution, in adult females, detected only in the abdomen with no expression in the head or thorax (at protein level).

It localises to the cytoplasm. It is found in the cytoskeleton. The protein localises to the spindle. Its subcellular location is the spindle pole. Functionally, as part of the augmin complex, plays a role in centrosome-independent generation of spindle microtubules. The complex is required for mitotic spindle assembly through its involvement in localizing gamma-tubulin to spindle microtubules. wac is dispensable for somatic mitosis and for assembly of spindle microtubules in oocytes during female meiosis but is required during female meiosis for chromosome alignment and segregation. It is required for microtubule assembly near spindle poles in oocytes. It is also required for acentrosomal microtubule nucleation and meiotic spindle formation during male meiosis. wac binds to microtubules in vitro. This chain is Augmin complex subunit wac, found in Drosophila melanogaster (Fruit fly).